A 163-amino-acid chain; its full sequence is Putative defense protein 3 (163 aa).

An N-terminal signal peptide occupies residues 1 to 18 (MMFAYIVAVVSALALTSA). A Reelin domain is found at 19 to 163 (YPTGAPSSTC…SAPVTVLSHK (145 aa)). A disulfide bond links C28 and C103.

The protein belongs to the insect defense protein family.

Its subcellular location is the secreted. May have antimicrobial activity. This Antheraea mylitta (Tasar silkworm) protein is Putative defense protein 3.